The primary structure comprises 977 residues: Ephrin type-A receptor 1 (977 aa).

An N-terminal signal peptide occupies residues 1–26 (MERRWPLGLALLLLLLCAPLPPGARA). Residues 27 to 548 (EEVTLMDTST…PVSRSLTGGE (522 aa)) lie on the Extracellular side of the membrane. The region spanning 28–210 (EVTLMDTSTA…FYQRCAETVH (183 aa)) is the Eph LBD domain. 2 consecutive Fibronectin type-III domains span residues 333 to 446 (PPSA…MGHA) and 448 to 539 (SLSG…TSPP). Residues asparagine 415 and asparagine 479 are each glycosylated (N-linked (GlcNAc...) asparagine). Residues 549-569 (IVAVIFGLLLGIALLIGIYVF) traverse the membrane as a helical segment. Residues 570–977 (RSRRGQRQRQ…ILCSIQGFKD (408 aa)) are Cytoplasmic-facing. Phosphotyrosine; by autocatalysis occurs at positions 600 and 606. The 261-residue stretch at 625–885 (LIVDTVIGEG…QLQAHLEQLL (261 aa)) folds into the Protein kinase domain. ATP is bound by residues 631–639 (IGEGEFGEV) and lysine 657. The active-site Proton acceptor is aspartate 750. Tyrosine 782 bears the Phosphotyrosine; by autocatalysis mark. Residues serine 907 and serine 911 each carry the phosphoserine modification. One can recognise an SAM domain in the interval 914–977 (IPYRSVSEWL…ILCSIQGFKD (64 aa)). The PDZ-binding motif lies at 975 to 977 (FKD).

The protein belongs to the protein kinase superfamily. Tyr protein kinase family. Ephrin receptor subfamily. Homodimer. Forms a signaling complex with LCK; PTK2B/PYK2 and PI3-kinase upon activation by EFNA1; regulates T-lymphocytes migration. Interacts (via SAM domain) with ILK (via ANK repeats); stimulated by EFNA1 but independent of the kinase activity of EPHA1. Interacts (kinase activity-dependent) with PTK2/FAK1. In terms of processing, phosphorylated. Autophosphorylation is stimulated by its ligand EFNA1. Post-translationally, ubiquitinated. As to expression, preferentially expressed in epithelial cells including skin, kidney, liver and thymus. Expressed in myogenic progenitor cells.

Its subcellular location is the cell membrane. It catalyses the reaction L-tyrosyl-[protein] + ATP = O-phospho-L-tyrosyl-[protein] + ADP + H(+). Receptor tyrosine kinase which binds promiscuously membrane-bound ephrin-A family ligands residing on adjacent cells, leading to contact-dependent bidirectional signaling into neighboring cells. The signaling pathway downstream of the receptor is referred to as forward signaling while the signaling pathway downstream of the ephrin ligand is referred to as reverse signaling. Binds with a low affinity EFNA3 and EFNA4 and with a high affinity to EFNA1 which most probably constitutes its cognate/functional ligand. Upon activation by EFNA1 induces cell attachment to the extracellular matrix inhibiting cell spreading and motility through regulation of ILK and downstream RHOA and RAC. Also plays a role in angiogenesis and regulates cell proliferation. May play a role in apoptosis. This chain is Ephrin type-A receptor 1 (Epha1), found in Mus musculus (Mouse).